A 714-amino-acid chain; its full sequence is MAPRRRRRAARSSRPLLLALLAAAVNNFAPAGGVEVLAKSRLESCARGGSDDGRDRLTCDSKIVVDLAVPSGSASLVARVAEVEENGTEAGEMPIRDPLIITINKSEVYALYDLTYLRDVAYKPEEKFVKTRKCEPEAGANVVKSCERLRDEKGSIIEHTEPVCCPCGPHRRVPSSCGNILDKVAKGKANTAHCLRFPDDWFHVFDIGRRSLWFSIRVQVKKGSSESEVIVGPENRTVVSEDSSLRVNLVGDFAGYTSLPSLENFYLVTPRKGVGGGQLEVLGDDFSRWMLLERVLFTLDGLECNKIGVGYEAFRSQPNFCSSPLDSCLGDQLSKFWEIDKNRVNNSQPPQYVVLGKFERINQYPNAGVHTFSVGIPEVLNTNLMIELSADDIEYVYQRSSGKIISINISSFEALSQVGSARVKTKNIGRLEASYSLTFDCLSGINPVEEQYFIMKPDEKLIRTFDLRSSTDQASNYTCQAILKASDFSELDRKESQFSTTATVLNNGTQIGSSENHTKGGIWGFFEAIKAWCAKMWHMLINFFTGTTCSTRCWSFLKFVIHGLLLVAVLWLLHRKGLFDPLYYWWDGVVGSEAQERARRRHKRAHSHRHSHHHDAHKRHKTELAGHRRHHVLHIHDDDDPVAAAAAAEHVILRRHGRHEAALGVQHRDGLKLNKHRRHGGKAVALLPPGEIIVRDGGGCGGVEHGDRRHHAWH.

Residues 1–33 (MAPRRRRRAARSSRPLLLALLAAAVNNFAPAGG) form the signal peptide. The Extracellular portion of the chain corresponds to 34–552 (VEVLAKSRLE…FFTGTTCSTR (519 aa)). Cystine bridges form between C45/C59, C134/C164, C146/C194, C165/C321, C167/C177, C304/C328, and C441/C479. Residues 553–573 (CWSFLKFVIHGLLLVAVLWLL) traverse the membrane as a helical segment. The Cytoplasmic portion of the chain corresponds to 574–714 (HRKGLFDPLY…HGDRRHHAWH (141 aa)). The disordered stretch occupies residues 597 to 619 (RARRRHKRAHSHRHSHHHDAHKR). The span at 598–619 (ARRRHKRAHSHRHSHHHDAHKR) shows a compositional bias: basic residues.

It belongs to the HAP2/GCS1 family.

It is found in the endoplasmic reticulum membrane. Its subcellular location is the cell membrane. Required for male fertility. Plays a role in pollen tube guidance and successful gamete attachment. Essential for the fusion of gametes during double fertilization, where one male gamete fuses with the egg to produce a zygote, and another male gamete fuses with the central cell to produce the endosperm. Mediates the fusion of cell membranes. Not required for pollen tube outgrowth. This Oryza sativa subsp. japonica (Rice) protein is Protein HAPLESS 2-B (HAP2B).